Here is a 345-residue protein sequence, read N- to C-terminus: Ryncolin-1 (345 aa).

The signal sequence occupies residues 1-19 (MKPWAAFHLIFLVASSLEG). The disordered stretch occupies residues 48–118 (ILQSQPGIPG…DKGDKGEDCN (71 aa)). The Collagen-like domain maps to 57 to 114 (GIPGVPGTNGSEGLKGDPGPQGPPGIRGPDGIRGEAGPKGDKGDQGDKGDKGDKGDKG). Residues 86-116 (DGIRGEAGPKGDKGDQGDKGDKGDKGDKGED) are compositionally biased toward basic and acidic residues. The Fibrinogen C-terminal domain occupies 121-339 (GCLPTEVRNC…YADMKIRPQQ (219 aa)). Cystine bridges form between C130–C158 and C282–C295.

The protein belongs to the ficolin lectin family. Veficolin subfamily. Post-translationally, hydroxylated, possibly at Pro-80. As to expression, expressed by the venom duct.

Its subcellular location is the secreted. Initiates complement activation and/or interferes in platelet aggregation and/or blood coagulation. This is Ryncolin-1 from Cerberus rynchops (Dog-faced water snake).